We begin with the raw amino-acid sequence, 135 residues long: Interleukin-4 (135 aa).

A signal peptide spans 1–24 (MGLTSQLIPALVCLLVCTSHFVHG). Cystine bridges form between C48-C85 and C70-C105. N-linked (GlcNAc...) asparagine glycans are attached at residues N62 and N96.

The protein belongs to the IL-4/IL-13 family.

It is found in the secreted. Participates in at least several B-cell activation processes as well as of other cell types. It is a costimulator of DNA-synthesis. It induces the expression of class II MHC molecules on resting B-cells. It enhances both secretion and cell surface expression of IgE and IgG1. It also regulates the expression of the low affinity Fc receptor for IgE (CD23) on both lymphocytes and monocytes. Positively regulates IL31RA expression in macrophages. Stimulates autophagy in dendritic cells by interfering with mTORC1 signaling and through the induction of RUFY4. The polypeptide is Interleukin-4 (IL4) (Ovis aries (Sheep)).